Consider the following 212-residue polypeptide: MGTEFNGLFDEWAHTYDSFVQGEDIQYKEVFAHYEDILEDVVNKSFGNVLEFGVGTGNLTNKLLLAGRTVYGIEPSREMRMIAKEKLPKEFSITEGDFLSFEVPNSIDTIVSTYAFHHLTDDEKNVAIAKYSQLLNKGGKIVFADTIFADQDAYDKTVEAAKQRGFHELANDLQTEYYTRIPIMQTIFENNGFHVTFTRLNHFVWVMEATKQ.

3 residues coordinate S-adenosyl-L-methionine: G53, E74, and D97.

Belongs to the methyltransferase superfamily. YrrT family.

In terms of biological role, could be a S-adenosyl-L-methionine-dependent methyltransferase. This is an uncharacterized protein from Bacillus cereus (strain ATCC 10987 / NRS 248).